Here is a 454-residue protein sequence, read N- to C-terminus: Bifunctional protein GlmU (454 aa).

A pyrophosphorylase region spans residues 1-228; sequence MTLPLHVVIL…PQHVEGANDP (228 aa). UDP-N-acetyl-alpha-D-glucosamine is bound by residues 10 to 13, Lys-24, Gln-76, 81 to 82, 103 to 105, Gly-138, Glu-153, Asn-168, and Asn-226; these read LAAG, GT, and YGD. Asp-105 lines the Mg(2+) pocket. Asn-226 lines the Mg(2+) pocket. The linker stretch occupies residues 229–249; the sequence is WQLAQLERAWQLRAARTLCLQ. Residues 250-454 are N-acetyltransferase; it reads GVRMADPARV…IEGWKRPTKK (205 aa). Residues Arg-332 and Lys-350 each coordinate UDP-N-acetyl-alpha-D-glucosamine. His-362 serves as the catalytic Proton acceptor. UDP-N-acetyl-alpha-D-glucosamine contacts are provided by Tyr-365 and Asn-376. Acetyl-CoA contacts are provided by residues Ala-379, 385–386, Ser-404, Ala-422, and Arg-439; that span reads NY.

It in the N-terminal section; belongs to the N-acetylglucosamine-1-phosphate uridyltransferase family. This sequence in the C-terminal section; belongs to the transferase hexapeptide repeat family. Homotrimer. Mg(2+) serves as cofactor.

It is found in the cytoplasm. It carries out the reaction alpha-D-glucosamine 1-phosphate + acetyl-CoA = N-acetyl-alpha-D-glucosamine 1-phosphate + CoA + H(+). The enzyme catalyses N-acetyl-alpha-D-glucosamine 1-phosphate + UTP + H(+) = UDP-N-acetyl-alpha-D-glucosamine + diphosphate. It functions in the pathway nucleotide-sugar biosynthesis; UDP-N-acetyl-alpha-D-glucosamine biosynthesis; N-acetyl-alpha-D-glucosamine 1-phosphate from alpha-D-glucosamine 6-phosphate (route II): step 2/2. The protein operates within nucleotide-sugar biosynthesis; UDP-N-acetyl-alpha-D-glucosamine biosynthesis; UDP-N-acetyl-alpha-D-glucosamine from N-acetyl-alpha-D-glucosamine 1-phosphate: step 1/1. Its pathway is bacterial outer membrane biogenesis; LPS lipid A biosynthesis. Catalyzes the last two sequential reactions in the de novo biosynthetic pathway for UDP-N-acetylglucosamine (UDP-GlcNAc). The C-terminal domain catalyzes the transfer of acetyl group from acetyl coenzyme A to glucosamine-1-phosphate (GlcN-1-P) to produce N-acetylglucosamine-1-phosphate (GlcNAc-1-P), which is converted into UDP-GlcNAc by the transfer of uridine 5-monophosphate (from uridine 5-triphosphate), a reaction catalyzed by the N-terminal domain. The polypeptide is Bifunctional protein GlmU (Xanthomonas euvesicatoria pv. vesicatoria (strain 85-10) (Xanthomonas campestris pv. vesicatoria)).